Consider the following 820-residue polypeptide: 1,4-alpha-glucan-branching enzyme, chloroplastic/amyloplastic (820 aa).

Residues 1–20 are compositionally biased toward low complexity; it reads MLCLTSSSSSAPAPLLPSLA. The interval 1-28 is disordered; the sequence is MLCLTSSSSSAPAPLLPSLADRPSPGIA. Residues 1 to 64 constitute a chloroplast transit peptide; sequence MLCLTSSSSS…SVPATARKNK (64 aa). (1,4-alpha-D-glucosyl)n is bound by residues Trp-153 and Lys-188. The Nucleophile role is filled by Asp-409. Residue Glu-464 is the Proton donor of the active site.

The protein belongs to the glycosyl hydrolase 13 family. GlgB subfamily. In terms of assembly, monomer.

The protein localises to the plastid. Its subcellular location is the chloroplast. It localises to the amyloplast. The enzyme catalyses Transfers a segment of a (1-&gt;4)-alpha-D-glucan chain to a primary hydroxy group in a similar glucan chain.. It functions in the pathway glycan biosynthesis; starch biosynthesis. Its function is as follows. Catalyzes the formation of the alpha-1,6-glucosidic linkages in starch by scission of a 1,4-alpha-linked oligosaccharide from growing alpha-1,4-glucan chains and the subsequent attachment of the oligosaccharide to the alpha-1,6 position. The chain is 1,4-alpha-glucan-branching enzyme, chloroplastic/amyloplastic (SBE1) from Oryza sativa subsp. japonica (Rice).